A 93-amino-acid polypeptide reads, in one-letter code: Alpha-defensin 6/12 (93 aa).

Residues 1–19 (MKTLILLSALVLLAFQVQA) form the signal peptide. Positions 20-60 (DPIQNTDEETKTEEQPGEEDQAVSVSFGDPEGTSLQEESLR) are excised as a propeptide. The disordered stretch occupies residues 23–54 (QNTDEETKTEEQPGEEDQAVSVSFGDPEGTSL). 3 disulfides stabilise this stretch: Cys64–Cys92, Cys66–Cys81, and Cys71–Cys91.

Belongs to the alpha-defensin family. Paneth cells of the small bowel.

Its subcellular location is the secreted. Its function is as follows. Has broad-spectrum antimicrobial properties. Has antibacterial activity against the Gram-positive bacterium L.monocytogenes EGD and the Gram-negative bacteria E.coli ML-35p and avirulent S.typhimurium 7953, but not against the mouse-virulent S.typhimurium 14028S. Probably contributes to the antimicrobial barrier function of the small bowel mucosa. The chain is Alpha-defensin 6/12 (Defa6) from Mus musculus (Mouse).